A 369-amino-acid polypeptide reads, in one-letter code: UPF0283 membrane protein RPA1583 (369 aa).

The tract at residues 1-61 (MTERVPPRRP…APPPPPPRAR (61 aa)) is disordered. Residues 34–51 (AKPSAKADARPAASAAGA) show a composition bias toward low complexity. 3 helical membrane-spanning segments follow: residues 90–110 (WGTV…WLWI), 124–144 (LGTI…IIIG), and 239–259 (VSLV…VAIA).

Belongs to the UPF0283 family.

Its subcellular location is the cell inner membrane. This is UPF0283 membrane protein RPA1583 from Rhodopseudomonas palustris (strain ATCC BAA-98 / CGA009).